The chain runs to 511 residues: Protein HESO1 (511 aa).

The segment at Ala-378–Gln-511 is disordered. Positions Gln-381 to Ser-392 are enriched in low complexity. Polar residues predominate over residues Leu-404 to Gly-465.

This sequence belongs to the DNA polymerase type-B-like family.

It is found in the cytoplasm. Its subcellular location is the P-body. The protein resides in the nucleus. It catalyses the reaction RNA(n) + UTP = RNA(n)-3'-uridine ribonucleotide + diphosphate. Its activity is regulated as follows. Completely inhibited by 2'-O-methylation on the substrate RNA. Its function is as follows. Uridylates small RNAs to trigger their degradation. Catalyzes the uridylation of 5' fragments produced by AGO1-mediated cleavage of miRNA target RNAs. Acts synergistically with URT1 in unmethylated miRNA uridylation, leading to their degradation. URT1 and HESO1 prefer substrates with different 3' end nucleotides and act cooperatively to tail different forms of the same miRNAs. URT1 and HESO1 act sequentially, with URT1 mono-uridylating the miRNAs followed by their further uridylation by HESO1. URT1 and HESO1 are involved in the uridylation and clearance of RISC-generated 5' mRNA fragments. Able to act on AGO1-bound miRNAs and the uridylated species stay associated with AGO1. This is Protein HESO1 from Arabidopsis thaliana (Mouse-ear cress).